Consider the following 459-residue polypeptide: MQIQFHLYNTLSRTKEVFNPQDQTKVKMYVCGPTVYDNPHIGNSRSVVVYDLLYRIVIKIFGEQSVKYVRNITDVDDKIIDRAELLSITINELTDKVTQEFHTNMAYLGCLLPSIEPKATEHIDVMIEIIERLIAKDHAYIADNHVYFDVLSAPNYTELSNRNLEEMFEGVRIENSKTKKHPQDFVLWKPAKPNESANMNFKSPWGFGRPGWHIECSAMSYKYLGENFDIHGGGADLIFPHHTNEIAQSRCAFPDSTYAKYWVHNGFLTVNGEKMSKSLGNFITVRNLMDKEISGEVVRLFLLSSHYRRPLDYNDKAIEDAKKTLDYWYRAIENINVQKIDLPHNFMQSLLDDMNTPLAVKIINDYAKGVFISKTEEEKQLNASAIITCANFIGLMNKTPHEWFNSGVDELYINELLNKRLEAKKQKNWLLADQIRNQLLEEKIILEDKPDGTTIWRKE.

Cys31 contributes to the Zn(2+) binding site. Residues 33-43 (PTVYDNPHIGN) carry the 'HIGH' region motif. Cys216, His241, and Glu245 together coordinate Zn(2+). Residues 274-278 (KMSKS) carry the 'KMSKS' region motif. An ATP-binding site is contributed by Lys277.

It belongs to the class-I aminoacyl-tRNA synthetase family. Monomer. It depends on Zn(2+) as a cofactor.

Its subcellular location is the cytoplasm. The catalysed reaction is tRNA(Cys) + L-cysteine + ATP = L-cysteinyl-tRNA(Cys) + AMP + diphosphate. The chain is Cysteine--tRNA ligase from Rickettsia felis (strain ATCC VR-1525 / URRWXCal2) (Rickettsia azadi).